A 478-amino-acid chain; its full sequence is Adenosylhomocysteinase (478 aa).

3 residues coordinate substrate: Thr-56, Asp-139, and Glu-201. 202–204 (TTT) contacts NAD(+). Substrate-binding residues include Lys-231 and Asp-235. NAD(+) contacts are provided by residues Asn-236, 265–270 (GYGDVG), Glu-288, Asn-323, 344–346 (IGH), and Asn-392.

This sequence belongs to the adenosylhomocysteinase family. NAD(+) is required as a cofactor.

Its subcellular location is the cytoplasm. The enzyme catalyses S-adenosyl-L-homocysteine + H2O = L-homocysteine + adenosine. It functions in the pathway amino-acid biosynthesis; L-homocysteine biosynthesis; L-homocysteine from S-adenosyl-L-homocysteine: step 1/1. Its function is as follows. May play a key role in the regulation of the intracellular concentration of adenosylhomocysteine. The sequence is that of Adenosylhomocysteinase from Corynebacterium diphtheriae (strain ATCC 700971 / NCTC 13129 / Biotype gravis).